The chain runs to 713 residues: Forkhead box protein P2 (713 aa).

The span at 1-28 shows a compositional bias: polar residues; that stretch reads MMQESATETISNSSMNQNGMSTLSSQLD. Disordered stretches follow at residues 1–44 and 283–337; these read MMQE…SSEV and KHGG…TGAS. Positions 290 to 303 are enriched in low complexity; it reads TTNNSSSTTSSTTS. A compositionally biased stretch (polar residues) spans 313-322; the sequence is SIVNGQSSVL. Positions 324-335 are enriched in basic and acidic residues; that stretch reads ARRDSSSHEETG. A C2H2-type zinc finger spans residues 344–369; it reads GVCKWPGCESICEDFGQFLKHLNNEH. The tract at residues 386–407 is leucine-zipper; that stretch reads VQQLEIQLSKERERLQAMMTHL. The tract at residues 420–424 is CTBP1-binding; that stretch reads PLNLV. The span at 436-457 shows a compositional bias: low complexity; that stretch reads TSPQSLPQTPTTPTAPVTPITQ. The interval 436–463 is disordered; the sequence is TSPQSLPQTPTTPTAPVTPITQGPSVIT. The segment at residues 502-592 is a DNA-binding region (fork-head); the sequence is RPPFTYATLI…SQKITGSPTL (91 aa). Disordered regions lie at residues 647 to 666 and 676 to 713; these read LDHI…QPHI and VIAE…EDLE. Positions 697–713 are enriched in acidic residues; that stretch reads LEDDREIEEEPLSEDLE.

Forms homodimers and heterodimers with FOXP1 and FOXP4. Dimerization is required for DNA-binding. Interacts with CTBP1. Interacts with FOXP1. Interacts with TBR1. Interacts with ZMYM2.

The protein resides in the nucleus. Its function is as follows. Transcriptional repressor that may play a role in the specification and differentiation of lung epithelium. May also play a role in developing neural, gastrointestinal and cardiovascular tissues. Can act with CTBP1 to synergistically repress transcription but CTPBP1 is not essential. Plays a role in synapse formation by regulating SRPX2 levels. This chain is Forkhead box protein P2 (FOXP2), found in Gorilla gorilla gorilla (Western lowland gorilla).